We begin with the raw amino-acid sequence, 283 residues long: Formamidopyrimidine-DNA glycosylase (283 aa).

The active-site Schiff-base intermediate with DNA is P2. The active-site Proton donor is E3. The Proton donor; for beta-elimination activity role is filled by K58. DNA contacts are provided by H100, R119, and R162. The FPG-type zinc finger occupies 247-283; sequence RVYGREGLPCVTPGCSGTVGRIVQSGRSSFHCPLCQR. The active-site Proton donor; for delta-elimination activity is the R273.

This sequence belongs to the FPG family. In terms of assembly, monomer. Zn(2+) serves as cofactor.

The catalysed reaction is Hydrolysis of DNA containing ring-opened 7-methylguanine residues, releasing 2,6-diamino-4-hydroxy-5-(N-methyl)formamidopyrimidine.. It carries out the reaction 2'-deoxyribonucleotide-(2'-deoxyribose 5'-phosphate)-2'-deoxyribonucleotide-DNA = a 3'-end 2'-deoxyribonucleotide-(2,3-dehydro-2,3-deoxyribose 5'-phosphate)-DNA + a 5'-end 5'-phospho-2'-deoxyribonucleoside-DNA + H(+). Functionally, involved in base excision repair of DNA damaged by oxidation or by mutagenic agents. Acts as a DNA glycosylase that recognizes and removes damaged bases. Has a preference for oxidized purines, such as 7,8-dihydro-8-oxoguanine (8-oxoG). Has AP (apurinic/apyrimidinic) lyase activity and introduces nicks in the DNA strand. Cleaves the DNA backbone by beta-delta elimination to generate a single-strand break at the site of the removed base with both 3'- and 5'-phosphates. In Cereibacter sphaeroides (strain KD131 / KCTC 12085) (Rhodobacter sphaeroides), this protein is Formamidopyrimidine-DNA glycosylase.